Reading from the N-terminus, the 1246-residue chain is MGDMKTPDFDDLLAAFDIPDIDAKEAIQSDTHGNHNEHSSVVGKERSGSPSLRPSGSPDPPHNDPSVVSVIVKNSVHSDDKAEGNETGEFSSADESQKSPQKGPSKDSSVPTDPFIYNGLKSVSDGSTESPPSLDLAPGQHNGPLWSLSASKATGDDDKHNDAFTNHPASTFQSLPLSNHPSVSSHLISPNFSSKVDSEEAQAINGTLRAGVRRHQSEDEESEPDLGSPALVIQESPISQLCPAPKVPRMQRSPSSVFQPPSPSSPSLPVSNTQMEEPSVQHPKLHSSTNPTSLTSTNNLPVEEKDLEHIIEERDSPESPEPEISQSRTSLPSNSQGAIESKQRITREEAPQDEVMDVSMQEKVDYGAEATEGKSTEPTLVESASDAISNSASSKPLKMRIKTVKKPVVSITRTVSKAATKGGASKGSGASKVQAVARKSLQKIPRSVASPQLLSQSTKVAMLPVSTLQDASTAMLFAASRAQNQMPTALSATAVNITRTSNLPSISSSSIPGVNVRAASGQKTNTGTAKPASIVNSPGAVISRSQSSLVEAFNKILNSKNPLPSYQPDLTSLPPPEWGLRLPSTGYRCLECGDAFALERSLARHYDRRSMRIEVTCNHCSKRLAFFNKCSLLLHAREHKEKGLVMQCSHLVMSPVSVEQMIGQQDTVPIGVLSPAVSALSAIKESGVNLSQSSDHSCPECWSTFKGKQELVAHFQEVEPGGTDTCCLQCSPPMPLWNSCCAAAHRRMHQQLPPLVCPECGLICQTHELNTHLKQTCLHYSRRLGYKCACCHLVFGGVNSQNAVKTHMQTAHCEIFHKCPSCPMAFKSSSGAESHCASQHPELSESARQSKEIYKCVMCRTVFTQKSLLSVHIDTHLTKQKMHVFKCPDCNKLFTQRTSLLEHVKDTHRETSNHDGTSTQNSLVKMESSDGEEWGRDEEEDKGKVSDANSAVPRSQSWSCSQCQTHYTDKENYISHMTEQHGKELKKFPCTLCEGSFSSSSSLRRHIRVKHKGIKRVFYCQLCTGEKRSFSSKLILEKHIQAQHAGERGTATQSQAVPQFTDGADSSSEHDAGVLGGSSVEPESRLAESTLTRRIKGAPVGEQEAKGLRCMPCGFTTEDREEFLQHIVCHRDGGSGAQCQQCGACFASSSSLSRHLFISHRVRDSPSDHAEAALHTCATSVASDSAAAGGSPGSPLSVVGGLLEDGEGKHICKVCGRYFSKPADLNTHFRTHGMAFITAYKTDKPA.

Over residues Lys-24–Ser-47 the composition is skewed to basic and acidic residues. The tract at residues Lys-24–Ala-387 is disordered. Composition is skewed to polar residues over residues Gly-88–Pro-111 and Ala-163–Lys-195. A compositionally biased stretch (low complexity) spans Ser-287 to Pro-301. A compositionally biased stretch (basic and acidic residues) spans Val-302 to Pro-317. Residues Gln-326–Ala-338 show a composition bias toward polar residues. Composition is skewed to basic and acidic residues over residues Ser-341–Ala-350 and Met-360–Ser-375. A C2H2-type 1 zinc finger spans residues Tyr-587–His-619. A C2H2-type 2; degenerate zinc finger spans residues His-696–Glu-719. 3 consecutive C2H2-type zinc fingers follow at residues His-817–His-840, Tyr-854–His-876, and Phe-885–His-908. Positions Thr-907 to Pro-953 are disordered. The segment covering His-914 to Leu-923 has biased composition (polar residues). Acidic residues predominate over residues Ser-929–Glu-940. 2 C2H2-type zinc fingers span residues Trp-958–His-981 and Phe-988–His-1011. The C2H2-type 8; degenerate zinc-finger motif lies at Phe-1018–His-1044. The segment at Ala-1045–Arg-1093 is disordered. C2H2-type zinc fingers lie at residues Ala-1137–His-1160 and His-1210–His-1232.

Belongs to the krueppel C2H2-type zinc-finger protein family. Widely expressed with highest levels in kidney, spleen and ovary.

It localises to the nucleus. Functionally, may be involved in transcriptional regulation. The sequence is that of Zinc finger protein 687a (znf687a) from Danio rerio (Zebrafish).